The following is a 298-amino-acid chain: 4-hydroxy-tetrahydrodipicolinate synthase (298 aa).

Thr-51 is a binding site for pyruvate. The active-site Proton donor/acceptor is the Tyr-139. Residue Lys-167 is the Schiff-base intermediate with substrate of the active site. Position 209 (Ile-209) interacts with pyruvate.

Belongs to the DapA family. As to quaternary structure, homotetramer; dimer of dimers.

Its subcellular location is the cytoplasm. The enzyme catalyses L-aspartate 4-semialdehyde + pyruvate = (2S,4S)-4-hydroxy-2,3,4,5-tetrahydrodipicolinate + H2O + H(+). The protein operates within amino-acid biosynthesis; L-lysine biosynthesis via DAP pathway; (S)-tetrahydrodipicolinate from L-aspartate: step 3/4. Its function is as follows. Catalyzes the condensation of (S)-aspartate-beta-semialdehyde [(S)-ASA] and pyruvate to 4-hydroxy-tetrahydrodipicolinate (HTPA). The sequence is that of 4-hydroxy-tetrahydrodipicolinate synthase from Haemophilus influenzae (strain 86-028NP).